The following is a 248-amino-acid chain: Granzyme C (248 aa).

Positions 1 to 18 are cleaved as a signal peptide; sequence MPPVLILLTLLLPLRAGA. Residues 19–20 constitute a propeptide that is removed on maturation; sequence EE. One can recognise a Peptidase S1 domain in the interval 21–246; it reads IIGGNEISPH…FVSWIKKTMK (226 aa). A disulfide bridge connects residues Cys-50 and Cys-66. Active-site charge relay system residues include His-65 and Asp-109. 2 disulfide bridges follow: Cys-143/Cys-210 and Cys-174/Cys-189. The active-site Charge relay system is the Ser-204.

The protein belongs to the peptidase S1 family. Granzyme subfamily.

Its subcellular location is the cytolytic granule. Its function is as follows. This enzyme is probably necessary for target cell lysis in cell-mediated immune responses. The polypeptide is Granzyme C (Gzmc) (Mus musculus (Mouse)).